The chain runs to 186 residues: ATP synthase subunit delta (186 aa).

The protein belongs to the ATPase delta chain family. In terms of assembly, F-type ATPases have 2 components, F(1) - the catalytic core - and F(0) - the membrane proton channel. F(1) has five subunits: alpha(3), beta(3), gamma(1), delta(1), epsilon(1). CF(0) has four main subunits: a(1), b(1), b'(1) and c(10-14). The alpha and beta chains form an alternating ring which encloses part of the gamma chain. F(1) is attached to F(0) by a central stalk formed by the gamma and epsilon chains, while a peripheral stalk is formed by the delta, b and b' chains.

Its subcellular location is the cell inner membrane. Functionally, f(1)F(0) ATP synthase produces ATP from ADP in the presence of a proton or sodium gradient. F-type ATPases consist of two structural domains, F(1) containing the extramembraneous catalytic core and F(0) containing the membrane proton channel, linked together by a central stalk and a peripheral stalk. During catalysis, ATP synthesis in the catalytic domain of F(1) is coupled via a rotary mechanism of the central stalk subunits to proton translocation. Its function is as follows. This protein is part of the stalk that links CF(0) to CF(1). It either transmits conformational changes from CF(0) to CF(1) or is implicated in proton conduction. This chain is ATP synthase subunit delta, found in Dinoroseobacter shibae (strain DSM 16493 / NCIMB 14021 / DFL 12).